A 95-amino-acid polypeptide reads, in one-letter code: Co-chaperonin GroES (95 aa).

This sequence belongs to the GroES chaperonin family. Heptamer of 7 subunits arranged in a ring. Interacts with the chaperonin GroEL.

It is found in the cytoplasm. Its function is as follows. Together with the chaperonin GroEL, plays an essential role in assisting protein folding. The GroEL-GroES system forms a nano-cage that allows encapsulation of the non-native substrate proteins and provides a physical environment optimized to promote and accelerate protein folding. GroES binds to the apical surface of the GroEL ring, thereby capping the opening of the GroEL channel. This Ruegeria sp. (strain TM1040) (Silicibacter sp.) protein is Co-chaperonin GroES.